The primary structure comprises 413 residues: Gamma-glutamyl phosphate reductase (413 aa).

Belongs to the gamma-glutamyl phosphate reductase family.

It is found in the cytoplasm. The enzyme catalyses L-glutamate 5-semialdehyde + phosphate + NADP(+) = L-glutamyl 5-phosphate + NADPH + H(+). It functions in the pathway amino-acid biosynthesis; L-proline biosynthesis; L-glutamate 5-semialdehyde from L-glutamate: step 2/2. Its function is as follows. Catalyzes the NADPH-dependent reduction of L-glutamate 5-phosphate into L-glutamate 5-semialdehyde and phosphate. The product spontaneously undergoes cyclization to form 1-pyrroline-5-carboxylate. The polypeptide is Gamma-glutamyl phosphate reductase (Salinispora arenicola (strain CNS-205)).